A 440-amino-acid chain; its full sequence is Aclacinomycin-T 2-deoxy-L-fucose transferase (440 aa).

It catalyses the reaction dTDP-2-deoxy-beta-L-fucose + aclacinomycin T = aclacinomycin S + dTDP + H(+). Involved in the biosynthesis of the trisaccharide moiety characteristic of the antitumor drug aclacinomycins. In the first reaction, AknK catalyzes the transfer of 2-deoxy-beta-L-fucose from the activated donor dTDP-2-deoxy-beta-L-fucose to the mono-glycosylated aclacinomycin T (rhodosaminyl aklavinone), forming the di-glycosylated aclacinomycin S (L-2-deoxyfucosyl-L-rhodosaminyl aklavinone). It can also catalyze the addition of an alternate dTDP-L-sugar, dTDP-L-daunosamine, to aclacinomycin T and the addition of 2-deoxy-beta-L-fucose to the mono-glycosylated aglycones (monoglycosylated anthracyclines) such as daunomycin (daunorubicin), adriamycin (doxorubicin) and idarubicin. In vitro, AknK also catalyzes the addition of a second L-2-deoxyfucosyl moiety from dTDP-2-deoxy-beta-L-fucose, albeit with reduced activity, to the natural disaccharide chain of aclacinomycin S to produce L-deoxyfucosyl-L-deoxyfucosyl-L-rhodosaminyl aklavinone (2-deoxy-alpha-D-fucosyl-aclacinomycin S), a variant of the natural aclacinomycin A. This Streptomyces galilaeus protein is Aclacinomycin-T 2-deoxy-L-fucose transferase.